The sequence spans 475 residues: Dihydrolipoyl dehydrogenase (475 aa).

Residues 39-47 (EKDAYGGTC), K56, and A118 each bind FAD. An intrachain disulfide couples C47 to C52. NAD(+)-binding positions include 186–190 (GGGYI), E209, and 275–278 (AVGR). FAD-binding residues include D318 and A327. Residue H451 is the Proton acceptor of the active site.

The protein belongs to the class-I pyridine nucleotide-disulfide oxidoreductase family. Homodimer. It depends on FAD as a cofactor.

The protein localises to the cytoplasm. The catalysed reaction is N(6)-[(R)-dihydrolipoyl]-L-lysyl-[protein] + NAD(+) = N(6)-[(R)-lipoyl]-L-lysyl-[protein] + NADH + H(+). The sequence is that of Dihydrolipoyl dehydrogenase (lpdA) from Haloferax volcanii (strain ATCC 29605 / DSM 3757 / JCM 8879 / NBRC 14742 / NCIMB 2012 / VKM B-1768 / DS2) (Halobacterium volcanii).